The following is a 911-amino-acid chain: Nitrate reductase [NADH], clone PBNBR1412 (911 aa).

The segment at 53–72 (NDAVDDSYDSSDDEDESHNR) is disordered. Residues 56–68 (VDDSYDSSDDEDE) show a composition bias toward acidic residues. Residue cysteine 191 coordinates Mo-molybdopterin. One can recognise a Cytochrome b5 heme-binding domain in the interval 539–614 (AKMYSMSEVR…LEDYRIGELI (76 aa)). The heme site is built by histidine 574 and histidine 597. Residues 654–766 (REKVPVTLIE…KGPLGHIEYL (113 aa)) form the FAD-binding FR-type domain. Residues 706 to 709 (RAYT), 723 to 727 (VVKVY), phenylalanine 728, phenylalanine 735, 740 to 742 (LMS), and threonine 793 contribute to the FAD site.

The protein belongs to the nitrate reductase family. In terms of assembly, homodimer. It depends on FAD as a cofactor. Heme is required as a cofactor. Requires Mo-molybdopterin as cofactor.

It catalyses the reaction nitrite + NAD(+) + H2O = nitrate + NADH + H(+). Functionally, nitrate reductase is a key enzyme involved in the first step of nitrate assimilation in plants, fungi and bacteria. This is Nitrate reductase [NADH], clone PBNBR1412 (NIA2) from Brassica napus (Rape).